The chain runs to 86 residues: Small ribosomal subunit protein bS20 (86 aa).

The segment at M1–K25 is disordered. Over residues K12–K22 the composition is skewed to basic and acidic residues.

The protein belongs to the bacterial ribosomal protein bS20 family.

Functionally, binds directly to 16S ribosomal RNA. The chain is Small ribosomal subunit protein bS20 from Nocardioides sp. (strain ATCC BAA-499 / JS614).